A 103-amino-acid chain; its full sequence is Co-chaperonin GroES (103 aa).

It belongs to the GroES chaperonin family. Heptamer of 7 subunits arranged in a ring. Interacts with the chaperonin GroEL.

The protein resides in the cytoplasm. Functionally, together with the chaperonin GroEL, plays an essential role in assisting protein folding. The GroEL-GroES system forms a nano-cage that allows encapsulation of the non-native substrate proteins and provides a physical environment optimized to promote and accelerate protein folding. GroES binds to the apical surface of the GroEL ring, thereby capping the opening of the GroEL channel. This is Co-chaperonin GroES from Synechococcus sp. (strain CC9311).